We begin with the raw amino-acid sequence, 385 residues long: Signal transduction histidine-protein kinase/phosphatase DegS (385 aa).

A coiled-coil region spans residues 31 to 141 (QIGEQSRQQY…IERSESLVSQ (111 aa)). Position 76 is a phosphoserine (Ser-76). Positions 183–385 (RVSREIHDGP…FIMIKVPLSL (203 aa)) constitute a Histidine kinase domain. His-189 carries the post-translational modification Phosphohistidine; by autocatalysis.

In terms of processing, autophosphorylated. Phosphorylated in vitro at Ser-76 by the serine/threonine-protein kinase YbdM, which stimulates the phosphate transfer to DegU.

It is found in the cytoplasm. The catalysed reaction is ATP + protein L-histidine = ADP + protein N-phospho-L-histidine.. Its activity is regulated as follows. Regulated via serine phosphorylation of its input domain. Phosphotransfer from DegS to DegU is stimulated by phosphorylation on Ser-76 and by DegQ. Functionally, member of the two-component regulatory system DegS/DegU, which plays an important role in the transition growth phase. Involved in the control of expression of different cellular functions, including production of degradative enzymes such as the neutral and alkaline proteases, flagellum formation and biofilm formation. Acts both as a protein kinase that undergoes autophosphorylation and subsequently transfers the phosphate to DegU, and as a protein phosphatase that dephosphorylates phospho-DegU. The protein is Signal transduction histidine-protein kinase/phosphatase DegS (degS) of Bacillus subtilis (strain 168).